A 198-amino-acid chain; its full sequence is UPF0301 protein Tfu_2389 (198 aa).

This sequence belongs to the UPF0301 (AlgH) family.

The polypeptide is UPF0301 protein Tfu_2389 (Thermobifida fusca (strain YX)).